A 307-amino-acid polypeptide reads, in one-letter code: N-acetylmuramic acid 6-phosphate etherase (307 aa).

One can recognise an SIS domain in the interval 60–223 (AAQAIARGGR…STGAMVRIGK (164 aa)). The active-site Proton donor is the E88. The active site involves E119.

It belongs to the GCKR-like family. MurNAc-6-P etherase subfamily. As to quaternary structure, homodimer.

It carries out the reaction N-acetyl-D-muramate 6-phosphate + H2O = N-acetyl-D-glucosamine 6-phosphate + (R)-lactate. Its pathway is amino-sugar metabolism; N-acetylmuramate degradation. Its function is as follows. Specifically catalyzes the cleavage of the D-lactyl ether substituent of MurNAc 6-phosphate, producing GlcNAc 6-phosphate and D-lactate. This is N-acetylmuramic acid 6-phosphate etherase from Synechococcus elongatus (strain ATCC 33912 / PCC 7942 / FACHB-805) (Anacystis nidulans R2).